The sequence spans 50 residues: Light-harvesting protein B-880 alpha chain (50 aa).

At Met1 to Arg12 the chain is on the cytoplasmic side. Residues Ala13 to Leu33 form a helical membrane-spanning segment. Residue His29 coordinates a bacteriochlorophyll. Over Ser34 to Ala50 the chain is Periplasmic.

The protein belongs to the antenna complex alpha subunit family. In terms of assembly, the core complex is formed by different alpha and beta chains, binding bacteriochlorophyll molecules, and arranged most probably in tetrameric structures disposed around the reaction center. The non-pigmented gamma chains may constitute additional components.

Its subcellular location is the cell inner membrane. In terms of biological role, antenna complexes are light-harvesting systems, which transfer the excitation energy to the reaction centers. The protein is Light-harvesting protein B-880 alpha chain of Rhodoblastus acidophilus (Rhodopseudomonas acidophila).